The primary structure comprises 1487 residues: Major viral transcription factor (1487 aa).

4 disordered regions span residues 41–295 (AAPD…LPPG), 310–371 (LAKT…EEAP), 409–442 (REPL…SRDG), and 803–1007 (PPTR…HTPR). Over residues 66–75 (VIPPPSPAPE) the composition is skewed to pro residues. 2 stretches are compositionally biased toward low complexity: residues 165–193 (PSSA…SSSS) and 201–213 (DGAG…SSSS). Positions 214-224 (DDSDSDEGGEE) are enriched in acidic residues. The segment covering 235 to 272 (AAKTPSAAGSPGPSSGGDRPAAGAATPKSCRSGAASPG) has biased composition (low complexity). The span at 273–285 (APAPAPASAPAPS) shows a compositional bias: pro residues. Low complexity-rich tracts occupy residues 807 to 829 (SQQP…AEGS), 849 to 860 (PSSHSQSPQHSQ), and 867 to 877 (ATTATCCRATQ). Over residues 878–893 (TNARSRGQQHQPQKAR) the composition is skewed to polar residues. Residues 920 to 929 (HGRPRGKSGK) are compositionally biased toward basic residues. The span at 938-951 (AAQAGASASFSSSA) shows a compositional bias: low complexity. Basic and acidic residues predominate over residues 988 to 1007 (GPDRRGGFRRVPRGDCHTPR).

This sequence belongs to the herpesviridae ICP4 family. In terms of processing, a long stretch of serine residues may be a major site of phosphorylation.

The protein resides in the host nucleus. Functionally, this IE protein is a multifunctional protein capable of migrating to the nucleus, binding to DNA, trans-activating other viral genes, and autoregulating its own synthesis. This chain is Major viral transcription factor (IE), found in Equine herpesvirus 1 (strain Kentucky A) (EHV-1).